Reading from the N-terminus, the 181-residue chain is ATP-dependent protease subunit HslV (181 aa).

Thr-6 is a catalytic residue. Residues Gly-162, Cys-165, and Thr-168 each contribute to the Na(+) site.

This sequence belongs to the peptidase T1B family. HslV subfamily. A double ring-shaped homohexamer of HslV is capped on each side by a ring-shaped HslU homohexamer. The assembly of the HslU/HslV complex is dependent on binding of ATP.

It localises to the cytoplasm. The catalysed reaction is ATP-dependent cleavage of peptide bonds with broad specificity.. With respect to regulation, allosterically activated by HslU binding. Its function is as follows. Protease subunit of a proteasome-like degradation complex believed to be a general protein degrading machinery. This Nitratidesulfovibrio vulgaris (strain ATCC 29579 / DSM 644 / CCUG 34227 / NCIMB 8303 / VKM B-1760 / Hildenborough) (Desulfovibrio vulgaris) protein is ATP-dependent protease subunit HslV.